A 115-amino-acid polypeptide reads, in one-letter code: Phosphoribosyl-AMP cyclohydrolase (115 aa).

Asp80 contributes to the Mg(2+) binding site. Residue Cys81 coordinates Zn(2+). Mg(2+)-binding residues include Asp82 and Asp84. Zn(2+) contacts are provided by Cys97 and Cys104.

It belongs to the PRA-CH family. In terms of assembly, homodimer. The cofactor is Mg(2+). Zn(2+) serves as cofactor.

It is found in the cytoplasm. It carries out the reaction 1-(5-phospho-beta-D-ribosyl)-5'-AMP + H2O = 1-(5-phospho-beta-D-ribosyl)-5-[(5-phospho-beta-D-ribosylamino)methylideneamino]imidazole-4-carboxamide. Its pathway is amino-acid biosynthesis; L-histidine biosynthesis; L-histidine from 5-phospho-alpha-D-ribose 1-diphosphate: step 3/9. In terms of biological role, catalyzes the hydrolysis of the adenine ring of phosphoribosyl-AMP. This chain is Phosphoribosyl-AMP cyclohydrolase, found in Mycobacterium leprae (strain Br4923).